We begin with the raw amino-acid sequence, 281 residues long: Small ribosomal subunit protein uS2 (281 aa).

The interval 225-281 (LMERKAEKPEEEETEEAAPRRERRARSGARRSRQNENEATAEAATEVAEAPEAEEAE) is disordered. The span at 245 to 256 (RERRARSGARRS) shows a compositional bias: basic residues. Residues 262–272 (EATAEAATEVA) show a composition bias toward low complexity.

This sequence belongs to the universal ribosomal protein uS2 family.

The polypeptide is Small ribosomal subunit protein uS2 (Porphyromonas gingivalis (strain ATCC 33277 / DSM 20709 / CIP 103683 / JCM 12257 / NCTC 11834 / 2561)).